A 241-amino-acid polypeptide reads, in one-letter code: Pyridoxine 5'-phosphate synthase (241 aa).

3-amino-2-oxopropyl phosphate is bound at residue Asn7. 9-10 (DH) is a binding site for 1-deoxy-D-xylulose 5-phosphate. Arg18 provides a ligand contact to 3-amino-2-oxopropyl phosphate. Catalysis depends on His43, which acts as the Proton acceptor. Arg45 and His50 together coordinate 1-deoxy-D-xylulose 5-phosphate. Catalysis depends on Glu70, which acts as the Proton acceptor. Thr100 contacts 1-deoxy-D-xylulose 5-phosphate. His191 functions as the Proton donor in the catalytic mechanism. 3-amino-2-oxopropyl phosphate is bound by residues Gly192 and 213–214 (GH).

The protein belongs to the PNP synthase family. In terms of assembly, homooctamer; tetramer of dimers.

The protein resides in the cytoplasm. The enzyme catalyses 3-amino-2-oxopropyl phosphate + 1-deoxy-D-xylulose 5-phosphate = pyridoxine 5'-phosphate + phosphate + 2 H2O + H(+). The protein operates within cofactor biosynthesis; pyridoxine 5'-phosphate biosynthesis; pyridoxine 5'-phosphate from D-erythrose 4-phosphate: step 5/5. Functionally, catalyzes the complicated ring closure reaction between the two acyclic compounds 1-deoxy-D-xylulose-5-phosphate (DXP) and 3-amino-2-oxopropyl phosphate (1-amino-acetone-3-phosphate or AAP) to form pyridoxine 5'-phosphate (PNP) and inorganic phosphate. The sequence is that of Pyridoxine 5'-phosphate synthase from Acidithiobacillus ferrooxidans (strain ATCC 23270 / DSM 14882 / CIP 104768 / NCIMB 8455) (Ferrobacillus ferrooxidans (strain ATCC 23270)).